Here is a 142-residue protein sequence, read N- to C-terminus: Gonadotropin subunit beta-2 (142 aa).

Positions 1-24 (MLGLHVGTLMISLFLCILLEPVEG) are cleaved as a signal peptide. Disulfide bonds link cysteine 30–cysteine 78, cysteine 44–cysteine 93, cysteine 47–cysteine 131, cysteine 55–cysteine 109, cysteine 59–cysteine 111, and cysteine 114–cysteine 121. Asparagine 34 carries an N-linked (GlcNAc...) asparagine glycan.

This sequence belongs to the glycoprotein hormones subunit beta family. In terms of assembly, heterodimer of an alpha and a beta chain.

It localises to the secreted. Functionally, involved in gametogenesis and steroidogenesis. The sequence is that of Gonadotropin subunit beta-2 (cgbb) from Coregonus autumnalis (Arctic cisco).